Consider the following 121-residue polypeptide: HTH-type transcriptional regulator Rv1152 (121 aa).

The HTH gntR-type domain maps to 15–83; the sequence is KPLFDQLRTQ…GRFGTFISRF (69 aa). Positions 43–62 form a DNA-binding region, H-T-H motif; it reads VRDLAGQLGVAANTVARAYR.

It is found in the cytoplasm. Its subcellular location is the secreted. It localises to the cell wall. Transcriptional regulator that modulates resistance to vancomycin and aminoglycosides. Negatively regulates the expression of several genes responsive to vancomycin, resulting in decreased susceptibility of bacteria to vancomycin. Negatively regulates the expression of genes encoding the ribosome binding protein Hsp, the small subunit of sulfate adenylyltransferase CysD, the L-lysine-epsilon aminotransferase LAT and the protease HtpX. Also modulates purine metabolism and aminoglycoside antibiotic resistance. Negatively regulates the expression of purine metabolism-related genes and the accumulation of purine metabolites, which affects aminoglycoside antibiotic resistance. The protein is HTH-type transcriptional regulator Rv1152 of Mycobacterium tuberculosis (strain ATCC 25618 / H37Rv).